The primary structure comprises 458 residues: Ammonium transporter Rh type B (458 aa).

Residues 1 to 13 are Cytoplasmic-facing; sequence MAGSPSRAAGRRL. A helical membrane pass occupies residues 14 to 34; it reads QLPLLCLFLQGATAVLFAVFV. The Extracellular segment spans residues 35 to 61; the sequence is RYNHKTDAALWHRGNHSNADNEFYFRY. Residue asparagine 49 is glycosylated (N-linked (GlcNAc...) asparagine). A helical membrane pass occupies residues 62–82; that stretch reads PSFQDVHAMVFVGFGFLMVFL. At 83–86 the chain is on the cytoplasmic side; sequence QRYG. The helical transmembrane segment at 87–107 threads the bilayer; the sequence is FSSVGFTFLLAAFALQWSTLV. At 108–124 the chain is on the extracellular side; sequence QGFLHSFHSGHIHVGVE. The chain crosses the membrane as a helical span at residues 125-145; sequence SMINADFCAGAVLISFGAVLG. Over 146–149 the chain is Cytoplasmic; the sequence is KTGP. The chain crosses the membrane as a helical span at residues 150–170; it reads AQLLLMALLEVVLFGINEFVL. Residues 171–178 lie on the Extracellular side of the membrane; it reads LHLLGVRD. Residues 179 to 201 traverse the membrane as a helical segment; it reads AGGSMTIHTFGAYFGLVLSRVLY. The Cytoplasmic segment spans residues 202 to 219; that stretch reads RPQLEKSKHRQGSVYHSD. A helical membrane pass occupies residues 220 to 240; it reads LFAMIGTIFLWIFWPSFNSAL. Residues 241–251 are Extracellular-facing; that stretch reads TALGAGQHRTA. Residues 252–272 form a helical membrane-spanning segment; the sequence is LNTYYSLAASTLGTFALSALV. Residues 273-282 lie on the Cytoplasmic side of the membrane; that stretch reads GEDGRLDMVH. A helical transmembrane segment spans residues 283–303; it reads IQNAALAGGVVVGTSSEMMLT. Position 304 (proline 304) is a topological domain, extracellular. Residues 305 to 325 traverse the membrane as a helical segment; sequence FGALAAGFLAGTVSTLGYKFF. Residues 326 to 346 lie on the Cytoplasmic side of the membrane; it reads TPILESKFKVQDTCGVHNLHG. The helical transmembrane segment at 347–367 threads the bilayer; the sequence is MPGVLGALLGVLVAGLATHEA. Over 368-393 the chain is Extracellular; that stretch reads YGDGLESVFPLIAEGQRSATSQAMLQ. A helical membrane pass occupies residues 394 to 414; sequence LFGLFVTLMFASVGGGLGGLL. At 415 to 458 the chain is on the cytoplasmic side; sequence LKLPFLDSPPDSQCYEDQVHWQVPGEHEDEAQRPLRVEEADTQA. The tract at residues 416-424 is interaction with ANK3; sequence KLPFLDSPP. The Basolateral sorting signal signature appears at 429 to 432; that stretch reads YEDQ. The disordered stretch occupies residues 439–458; that stretch reads GEHEDEAQRPLRVEEADTQA. A compositionally biased stretch (basic and acidic residues) spans 444-458; the sequence is EAQRPLRVEEADTQA.

It belongs to the ammonium transporter (TC 2.A.49) family. Rh subfamily. As to quaternary structure, interacts (via C-terminus) with ANK2 and ANK3; required for targeting to the basolateral membrane. Post-translationally, N-glycosylated.

The protein resides in the cell membrane. It localises to the basolateral cell membrane. The enzyme catalyses NH4(+)(in) = NH4(+)(out). The catalysed reaction is methylamine(out) = methylamine(in). It carries out the reaction CO2(out) = CO2(in). Its function is as follows. Ammonium transporter involved in the maintenance of acid-base homeostasis. Transports ammonium and its related derivative methylammonium across the basolateral plasma membrane of epithelial cells likely contributing to renal transepithelial ammonia transport and ammonia metabolism. May transport either NH4(+) or NH3 ammonia species predominantly mediating an electrogenic NH4(+) transport. May act as a CO2 channel providing for renal acid secretion. The sequence is that of Ammonium transporter Rh type B (RHBG) from Macaca mulatta (Rhesus macaque).